A 173-amino-acid chain; its full sequence is Co-chaperone protein HscB homolog (173 aa).

Positions 5-77 constitute a J domain; sequence CHFALFDLQP…SQRARYLLAL (73 aa).

It belongs to the HscB family. In terms of assembly, interacts with HscA and stimulates its ATPase activity.

Functionally, co-chaperone involved in the maturation of iron-sulfur cluster-containing proteins. Seems to help targeting proteins to be folded toward HscA. This is Co-chaperone protein HscB homolog from Ectopseudomonas mendocina (strain ymp) (Pseudomonas mendocina).